The following is a 348-amino-acid chain: Alcohol dehydrogenase 2 (348 aa).

The Zn(2+) site is built by Cys-44, His-67, Cys-98, Cys-101, Cys-104, Cys-112, and Cys-154. NAD(+) is bound by residues 178–184, Asp-202, Lys-207, 269–271, and Arg-341; these read GAAGGLG and VGL.

The protein belongs to the zinc-containing alcohol dehydrogenase family. In terms of assembly, homotetramer. Zn(2+) is required as a cofactor.

The protein resides in the cytoplasm. The catalysed reaction is a primary alcohol + NAD(+) = an aldehyde + NADH + H(+). It carries out the reaction a secondary alcohol + NAD(+) = a ketone + NADH + H(+). The sequence is that of Alcohol dehydrogenase 2 (ADH2) from Candida albicans (strain SC5314 / ATCC MYA-2876) (Yeast).